A 597-amino-acid chain; its full sequence is Elongation factor 4 (597 aa).

The region spanning 2–184 is the tr-type G domain; sequence KHIRNFSIIA…TIVKSIPAPE (183 aa). Residues 14–19 and 131–134 contribute to the GTP site; these read DHGKST and NKID.

It belongs to the TRAFAC class translation factor GTPase superfamily. Classic translation factor GTPase family. LepA subfamily.

It localises to the cell inner membrane. It catalyses the reaction GTP + H2O = GDP + phosphate + H(+). In terms of biological role, required for accurate and efficient protein synthesis under certain stress conditions. May act as a fidelity factor of the translation reaction, by catalyzing a one-codon backward translocation of tRNAs on improperly translocated ribosomes. Back-translocation proceeds from a post-translocation (POST) complex to a pre-translocation (PRE) complex, thus giving elongation factor G a second chance to translocate the tRNAs correctly. Binds to ribosomes in a GTP-dependent manner. This chain is Elongation factor 4, found in Aliivibrio fischeri (strain ATCC 700601 / ES114) (Vibrio fischeri).